The primary structure comprises 185 residues: Ribosome-recycling factor (185 aa).

Belongs to the RRF family.

It is found in the cytoplasm. In terms of biological role, responsible for the release of ribosomes from messenger RNA at the termination of protein biosynthesis. May increase the efficiency of translation by recycling ribosomes from one round of translation to another. This Mycobacterium leprae (strain Br4923) protein is Ribosome-recycling factor.